The primary structure comprises 220 residues: Deoxyribose-phosphate aldolase 1 (220 aa).

Aspartate 89 (proton donor/acceptor) is an active-site residue. Residue lysine 151 is the Schiff-base intermediate with acetaldehyde of the active site. The active-site Proton donor/acceptor is the lysine 180.

It belongs to the DeoC/FbaB aldolase family. DeoC type 1 subfamily.

It localises to the cytoplasm. It catalyses the reaction 2-deoxy-D-ribose 5-phosphate = D-glyceraldehyde 3-phosphate + acetaldehyde. It participates in carbohydrate degradation; 2-deoxy-D-ribose 1-phosphate degradation; D-glyceraldehyde 3-phosphate and acetaldehyde from 2-deoxy-alpha-D-ribose 1-phosphate: step 2/2. Its function is as follows. Catalyzes a reversible aldol reaction between acetaldehyde and D-glyceraldehyde 3-phosphate to generate 2-deoxy-D-ribose 5-phosphate. The protein is Deoxyribose-phosphate aldolase 1 of Staphylococcus aureus (strain bovine RF122 / ET3-1).